The following is a 126-amino-acid chain: Aspartate 1-decarboxylase (126 aa).

S25 serves as the catalytic Schiff-base intermediate with substrate; via pyruvic acid. S25 is modified (pyruvic acid (Ser)). T57 provides a ligand contact to substrate. Y58 acts as the Proton donor in catalysis. 73-75 contacts substrate; that stretch reads GAA.

It belongs to the PanD family. As to quaternary structure, heterooctamer of four alpha and four beta subunits. The cofactor is pyruvate. Is synthesized initially as an inactive proenzyme, which is activated by self-cleavage at a specific serine bond to produce a beta-subunit with a hydroxyl group at its C-terminus and an alpha-subunit with a pyruvoyl group at its N-terminus.

Its subcellular location is the cytoplasm. The catalysed reaction is L-aspartate + H(+) = beta-alanine + CO2. Its pathway is cofactor biosynthesis; (R)-pantothenate biosynthesis; beta-alanine from L-aspartate: step 1/1. Its function is as follows. Catalyzes the pyruvoyl-dependent decarboxylation of aspartate to produce beta-alanine. The sequence is that of Aspartate 1-decarboxylase from Serratia proteamaculans (strain 568).